Reading from the N-terminus, the 392-residue chain is 5-azacytidine-induced protein 2 (392 aa).

Residues 1–197 (MDALVEDDIC…IELQKAKQTD (197 aa)) are homodimerization. Coiled-coil stretches lie at residues 40-76 (ALVTAYEDIKKRLKDSEKENSLLKKRIRFLEEKLIAR), 102-135 (DRDNLKSKLDKMNKDNSESLKVLNEQLQSKEVEL), and 166-196 (DLKIHGLEQELELMRKECSDLKIELQKAKQT). An interaction with TBK1 and IKBKE region spans residues 216 to 257 (SDNMQHAYWELKREMSNLHLVTQVQAELLRKLKTSTAIKKAC). A phosphoserine mark is found at serine 318 and serine 353. A disordered region spans residues 345–365 (EDNSWVFPSPPKSSETAFGET).

In terms of assembly, homodimer. Interacts with IKBKE, TBK1 and TICAM1. Interacts with TAX1BP1. Interacts with CALCOCO2. Post-translationally, ubiquitinated via 'Lys-48'-linked polyubiquitination by TRIM38, leading to its degradation.

Its subcellular location is the cytoplasm. In terms of biological role, adapter protein which binds TBK1 and IKBKE playing a role in antiviral innate immunity. Activates serine/threonine-protein kinase TBK1 and facilitates its oligomerization. Enhances the phosphorylation of NF-kappa-B p65 subunit RELA by TBK1. Promotes TBK1-induced as well as TNF-alpha or PMA-induced activation of NF-kappa-B. Participates in IFNB promoter activation via TICAM1. This is 5-azacytidine-induced protein 2 (AZI2) from Pongo abelii (Sumatran orangutan).